The sequence spans 311 residues: Pyrimidine-specific ribonucleoside hydrolase RihA (311 aa).

The active site involves His240.

This sequence belongs to the IUNH family. RihA subfamily.

In terms of biological role, hydrolyzes cytidine or uridine to ribose and cytosine or uracil, respectively. The chain is Pyrimidine-specific ribonucleoside hydrolase RihA from Shigella boydii serotype 4 (strain Sb227).